The following is a 306-amino-acid chain: Thiamine-monophosphate kinase (306 aa).

Mg(2+) contacts are provided by D27, T41, T42, and D43. H50 contacts substrate. A Mg(2+)-binding site is contributed by D71. ATP contacts are provided by residues Y101, 118–119 (GN), and R142. N119 provides a ligand contact to Mg(2+). D207 is a binding site for Mg(2+). ATP is bound at residue S209. A Mg(2+)-binding site is contributed by D210. Substrate is bound by residues E260 and W303.

It belongs to the thiamine-monophosphate kinase family. In terms of assembly, homodimer.

It catalyses the reaction thiamine phosphate + ATP = thiamine diphosphate + ADP. It participates in cofactor biosynthesis; thiamine diphosphate biosynthesis; thiamine diphosphate from thiamine phosphate: step 1/1. Its function is as follows. Catalyzes the ATP-dependent phosphorylation of thiamine-monophosphate (TMP) to form thiamine-pyrophosphate (TPP), the active form of vitamin B1. This is Thiamine-monophosphate kinase (thiL) from Aquifex aeolicus (strain VF5).